Reading from the N-terminus, the 553-residue chain is uncharacterized protein (553 aa).

The first 28 residues, 1–28 (MRYARHASRYSLFTLAVSAALLPGAGWA), serve as a signal peptide directing secretion.

This is an uncharacterized protein from Pseudomonas aeruginosa (strain ATCC 15692 / DSM 22644 / CIP 104116 / JCM 14847 / LMG 12228 / 1C / PRS 101 / PAO1).